Reading from the N-terminus, the 211-residue chain is Ribosome maturation factor RimM (211 aa).

A PRC barrel domain is found at 111–182 (PDAWYDHQLV…TLVITPPLGL (72 aa)). The disordered stretch occupies residues 184-211 (EEIPDEQPTPSATSDAEPGSAPEGDDAR).

This sequence belongs to the RimM family. In terms of assembly, binds ribosomal protein uS19.

The protein resides in the cytoplasm. Its function is as follows. An accessory protein needed during the final step in the assembly of 30S ribosomal subunit, possibly for assembly of the head region. Essential for efficient processing of 16S rRNA. May be needed both before and after RbfA during the maturation of 16S rRNA. It has affinity for free ribosomal 30S subunits but not for 70S ribosomes. In Clavibacter sepedonicus (Clavibacter michiganensis subsp. sepedonicus), this protein is Ribosome maturation factor RimM.